We begin with the raw amino-acid sequence, 229 residues long: Small ribosomal subunit protein uS3 (229 aa).

Residues 39–107 (VRQFLIKELK…PAQINISEVR (69 aa)) enclose the KH type-2 domain.

The protein belongs to the universal ribosomal protein uS3 family. As to quaternary structure, part of the 30S ribosomal subunit. Forms a tight complex with proteins S10 and S14.

Its function is as follows. Binds the lower part of the 30S subunit head. Binds mRNA in the 70S ribosome, positioning it for translation. The chain is Small ribosomal subunit protein uS3 from Photobacterium profundum (strain SS9).